The chain runs to 70 residues: Protein SlyX homolog (70 aa).

It belongs to the SlyX family.

This Shewanella woodyi (strain ATCC 51908 / MS32) protein is Protein SlyX homolog.